The following is a 319-amino-acid chain: V-set and transmembrane domain-containing protein 4 (319 aa).

The signal sequence occupies residues 1–23 (MRLRLLALAAAVLLGPAPEVCGA). An Ig-like domain is found at 24–154 (LNVTVSPGPV…SSATEMRVIS (131 aa)). N-linked (GlcNAc...) asparagine glycosylation is found at Asn-25 and Asn-41. Cys-46 and Cys-126 are disulfide-bonded. Asn-143 carries an N-linked (GlcNAc...) asparagine glycan. Residues 180–200 (AVLVCCVGILSVLLFTLVIAW) traverse the membrane as a helical segment.

In terms of processing, proteolytically cleaved to generate a bioactive peptide. As to expression, peptide Lv is widely expressed in various tissues and the central nervous system, including the retinal photoreceptor layer, hippocampus, olfactory bulb, and cerebellum.

Its subcellular location is the cell membrane. It localises to the secreted. Peptide Lv enhances L-type voltage-gated calcium channel (L-VGCC) currents in retinal photoreceptors. This is V-set and transmembrane domain-containing protein 4 (Vstm4) from Mus musculus (Mouse).